The chain runs to 501 residues: Aspartyl/glutamyl-tRNA(Asn/Gln) amidotransferase subunit B (501 aa).

The disordered stretch occupies residues 276 to 299 (HYQEADGSTSKGRPKETAEDYRYF). The span at 288–299 (RPKETAEDYRYF) shows a compositional bias: basic and acidic residues.

It belongs to the GatB/GatE family. GatB subfamily. As to quaternary structure, heterotrimer of A, B and C subunits.

It catalyses the reaction L-glutamyl-tRNA(Gln) + L-glutamine + ATP + H2O = L-glutaminyl-tRNA(Gln) + L-glutamate + ADP + phosphate + H(+). The enzyme catalyses L-aspartyl-tRNA(Asn) + L-glutamine + ATP + H2O = L-asparaginyl-tRNA(Asn) + L-glutamate + ADP + phosphate + 2 H(+). Functionally, allows the formation of correctly charged Asn-tRNA(Asn) or Gln-tRNA(Gln) through the transamidation of misacylated Asp-tRNA(Asn) or Glu-tRNA(Gln) in organisms which lack either or both of asparaginyl-tRNA or glutaminyl-tRNA synthetases. The reaction takes place in the presence of glutamine and ATP through an activated phospho-Asp-tRNA(Asn) or phospho-Glu-tRNA(Gln). The protein is Aspartyl/glutamyl-tRNA(Asn/Gln) amidotransferase subunit B of Corynebacterium glutamicum (strain R).